Here is a 332-residue protein sequence, read N- to C-terminus: Phosphoenolpyruvate transferase (332 aa).

Asp63 serves as a coordination point for 7,8-didemethyl-8-hydroxy-5-deazariboflavin.

Belongs to the CofD family. As to quaternary structure, homodimer. Requires Mg(2+) as cofactor.

It carries out the reaction enolpyruvoyl-2-diphospho-5'-guanosine + 7,8-didemethyl-8-hydroxy-5-deazariboflavin = dehydro coenzyme F420-0 + GMP + H(+). Its pathway is cofactor biosynthesis; coenzyme F420 biosynthesis. Catalyzes the transfer of the phosphoenolpyruvate moiety from enoylpyruvoyl-2-diphospho-5'-guanosine (EPPG) to 7,8-didemethyl-8-hydroxy-5-deazariboflavin (FO) with the formation of dehydro coenzyme F420-0 and GMP. In Nocardia farcinica (strain IFM 10152), this protein is Phosphoenolpyruvate transferase.